Here is a 190-residue protein sequence, read N- to C-terminus: Elongation factor P-like protein (190 aa).

The protein belongs to the elongation factor P family.

This is Elongation factor P-like protein from Edwardsiella ictaluri (strain 93-146).